Here is a 292-residue protein sequence, read N- to C-terminus: Acetylglutamate kinase (292 aa).

Residues 72 to 73, Arg-94, and Asn-187 each bind substrate; that span reads GG.

This sequence belongs to the acetylglutamate kinase family. ArgB subfamily.

It localises to the cytoplasm. The enzyme catalyses N-acetyl-L-glutamate + ATP = N-acetyl-L-glutamyl 5-phosphate + ADP. The protein operates within amino-acid biosynthesis; L-arginine biosynthesis; N(2)-acetyl-L-ornithine from L-glutamate: step 2/4. In terms of biological role, catalyzes the ATP-dependent phosphorylation of N-acetyl-L-glutamate. In Trichodesmium erythraeum (strain IMS101), this protein is Acetylglutamate kinase.